The sequence spans 243 residues: Adenosine 5'-phosphosulfate reductase (243 aa).

The [4Fe-4S] cluster site is built by Cys-126, Cys-127, Cys-209, and Cys-212. Cys-235 (nucleophile; cysteine thiosulfonate intermediate) is an active-site residue.

It belongs to the PAPS reductase family. CysH subfamily. It depends on [4Fe-4S] cluster as a cofactor.

The protein localises to the cytoplasm. The enzyme catalyses [thioredoxin]-disulfide + sulfite + AMP + 2 H(+) = adenosine 5'-phosphosulfate + [thioredoxin]-dithiol. Its pathway is sulfur metabolism; hydrogen sulfide biosynthesis; sulfite from sulfate. In terms of biological role, catalyzes the formation of sulfite from adenosine 5'-phosphosulfate (APS) using thioredoxin as an electron donor. This chain is Adenosine 5'-phosphosulfate reductase, found in Staphylococcus epidermidis (strain ATCC 35984 / DSM 28319 / BCRC 17069 / CCUG 31568 / BM 3577 / RP62A).